The following is a 270-amino-acid chain: Acyl-[acyl-carrier-protein]--UDP-N-acetylglucosamine O-acyltransferase (270 aa).

This sequence belongs to the transferase hexapeptide repeat family. LpxA subfamily. As to quaternary structure, homotrimer.

Its subcellular location is the cytoplasm. It catalyses the reaction a (3R)-hydroxyacyl-[ACP] + UDP-N-acetyl-alpha-D-glucosamine = a UDP-3-O-[(3R)-3-hydroxyacyl]-N-acetyl-alpha-D-glucosamine + holo-[ACP]. Its pathway is glycolipid biosynthesis; lipid IV(A) biosynthesis; lipid IV(A) from (3R)-3-hydroxytetradecanoyl-[acyl-carrier-protein] and UDP-N-acetyl-alpha-D-glucosamine: step 1/6. Functionally, involved in the biosynthesis of lipid A, a phosphorylated glycolipid that anchors the lipopolysaccharide to the outer membrane of the cell. This chain is Acyl-[acyl-carrier-protein]--UDP-N-acetylglucosamine O-acyltransferase, found in Helicobacter acinonychis (strain Sheeba).